The following is a 362-amino-acid chain: Cobalt-precorrin-5B C(1)-methyltransferase (362 aa).

Belongs to the CbiD family.

It catalyses the reaction Co-precorrin-5B + S-adenosyl-L-methionine = Co-precorrin-6A + S-adenosyl-L-homocysteine. The protein operates within cofactor biosynthesis; adenosylcobalamin biosynthesis; cob(II)yrinate a,c-diamide from sirohydrochlorin (anaerobic route): step 6/10. In terms of biological role, catalyzes the methylation of C-1 in cobalt-precorrin-5B to form cobalt-precorrin-6A. This is Cobalt-precorrin-5B C(1)-methyltransferase from Synechococcus sp. (strain CC9902).